The sequence spans 75 residues: UPF0270 protein Avin_35000 (75 aa).

It belongs to the UPF0270 family.

This is UPF0270 protein Avin_35000 from Azotobacter vinelandii (strain DJ / ATCC BAA-1303).